Reading from the N-terminus, the 527-residue chain is Laccase-5 (527 aa).

Residues 1-23 form the signal peptide; sequence MGKYHSFVNVVALSLSLSGRVFG. The region spanning 25-150 is the Plastocyanin-like 1 domain; that stretch reads IGPVTDLTIS…DGLRGPLVVY (126 aa). Residues asparagine 74 and asparagine 77 are each glycosylated (N-linked (GlcNAc...) asparagine). Cu cation is bound by residues histidine 87, histidine 89, histidine 132, and histidine 134. Cystine bridges form between cysteine 108-cysteine 516 and cysteine 140-cysteine 230. Residues asparagine 156, asparagine 209, asparagine 233, asparagine 242, asparagine 276, asparagine 317, asparagine 358, asparagine 366, asparagine 393, and asparagine 402 are each glycosylated (N-linked (GlcNAc...) asparagine). The region spanning 162–306 is the Plastocyanin-like 2 domain; the sequence is VDDDTTVITL…GGVNSAILRY (145 aa). In terms of domain architecture, Plastocyanin-like 3 spans 373–498; the sequence is TVPVLLQILS…AGFAIVWGED (126 aa). Positions 425, 428, 430, 480, 481, 482, and 486 each coordinate Cu cation.

This sequence belongs to the multicopper oxidase family. As to quaternary structure, homodimer. Cu cation serves as cofactor.

The protein localises to the secreted. It carries out the reaction 4 hydroquinone + O2 = 4 benzosemiquinone + 2 H2O. Its function is as follows. Lignin degradation and detoxification of lignin-derived products. This chain is Laccase-5 (LCC5), found in Trametes villosa (White-rot fungus).